The primary structure comprises 420 residues: MAALVRPARFVVRPLLQVVQAWDLDARRWVRALRRSPVKVVFPSGEVVEQKRAPGKQPRKAPSEASAQEQREKQPLEESASRAPSTWEESGLRYDKAYPGDRRLSSVMTIVKSRPFREKQGKILLEGRRLISDALKAGAVPKMFFFSRLEYLKELPVDKLKGVSLIKVKFEDIKDWSDLVTPQGIMGIFAKPDHVKMTYPKTQLQHSLPLLLICDNLRDPGNLGTILRSAAGAGCSKVLLTKGCVDAWEPKVLRAGMGAHFRMPIINNLEWETVPNYLPPDTRVYVADNCGLYAQAEMSNKASDHGWVCDQRVMKFHKYEEEEDVETGASQDWLPHVEVQSYDSDWTEAPAAVVIGGETYGVSLESLQLAESTGGKRLLIPVVPGVDSLNSAMAASILLFEGKRQLRGRAEDLSRDRSYH.

The transit peptide at Met-1–Val-40 directs the protein to the mitochondrion. The disordered stretch occupies residues Glu-49 to Glu-88. The segment covering Glu-69–Ala-80 has biased composition (basic and acidic residues). Residues Gly-356, Ile-380, and Leu-389 each coordinate S-adenosyl-L-methionine.

The protein belongs to the class IV-like SAM-binding methyltransferase superfamily. RNA methyltransferase TrmH family. In terms of tissue distribution, expressed at same level in normal liver and hepatocarcinoma.

It localises to the mitochondrion. The enzyme catalyses guanosine(1370) in 16S rRNA + S-adenosyl-L-methionine = 2'-O-methylguanosine(1370) in 16S rRNA + S-adenosyl-L-homocysteine + H(+). S-adenosyl-L-methionine-dependent 2'-O-ribose methyltransferase that catalyzes the formation of 2'-O-methylguanosine at position 1370 (Gm1370) in the 16S mitochondrial large subunit ribosomal RNA (mtLSU rRNA), a conserved modification in the peptidyl transferase domain of the mtLSU rRNA. Also required for formation of 2'-O-methyluridine at position 1369 (Um1369) mediated by MRM2. This chain is rRNA methyltransferase 3, mitochondrial, found in Homo sapiens (Human).